The following is a 213-amino-acid chain: Holliday junction branch migration complex subunit RuvA (213 aa).

Positions 1–63 (MIGMLTGRVA…EDAFKLYGFL (63 aa)) are domain I. The domain II stretch occupies residues 64–142 (DDIDRAWFVH…PTGRSFSIGL (79 aa)). The interval 143-160 (PVHSDDGTTGGAPVAPAG) is flexible linker. The interval 161–213 (GDSLAREDAVSALVNLGYNESQARQAVAKILRDADSEAPLGDVIRLSLKELAA) is domain III.

This sequence belongs to the RuvA family. In terms of assembly, homotetramer. Forms an RuvA(8)-RuvB(12)-Holliday junction (HJ) complex. HJ DNA is sandwiched between 2 RuvA tetramers; dsDNA enters through RuvA and exits via RuvB. An RuvB hexamer assembles on each DNA strand where it exits the tetramer. Each RuvB hexamer is contacted by two RuvA subunits (via domain III) on 2 adjacent RuvB subunits; this complex drives branch migration. In the full resolvosome a probable DNA-RuvA(4)-RuvB(12)-RuvC(2) complex forms which resolves the HJ.

The protein resides in the cytoplasm. In terms of biological role, the RuvA-RuvB-RuvC complex processes Holliday junction (HJ) DNA during genetic recombination and DNA repair, while the RuvA-RuvB complex plays an important role in the rescue of blocked DNA replication forks via replication fork reversal (RFR). RuvA specifically binds to HJ cruciform DNA, conferring on it an open structure. The RuvB hexamer acts as an ATP-dependent pump, pulling dsDNA into and through the RuvAB complex. HJ branch migration allows RuvC to scan DNA until it finds its consensus sequence, where it cleaves and resolves the cruciform DNA. In Maricaulis maris (strain MCS10) (Caulobacter maris), this protein is Holliday junction branch migration complex subunit RuvA.